A 129-amino-acid polypeptide reads, in one-letter code: MAFDFPDSYRYADSHEYAWQDAAAVRIGLSAYAVDQLGDIVFVDLPEVGAELNRGSSFGTVESVKAVEEMYAPLSGVVLQRNEALLANPEELQNDPHGEGWLLVIQPGDPSQMDQLMDAATYAAKVAAT.

One can recognise a Lipoyl-binding domain in the interval 24–106; sequence AVRIGLSAYA…HGEGWLLVIQ (83 aa). K65 is modified (N6-lipoyllysine).

It belongs to the GcvH family. The glycine cleavage system is composed of four proteins: P, T, L and H. The cofactor is (R)-lipoate.

Its function is as follows. The glycine cleavage system catalyzes the degradation of glycine. The H protein shuttles the methylamine group of glycine from the P protein to the T protein. This is Glycine cleavage system H protein from Synechococcus sp. (strain WH7803).